The sequence spans 468 residues: Tyrosine-protein phosphatase YopH (468 aa).

The interval 127–194 is disordered; it reads ARGHVSSHSH…TVSPYGPEAR (68 aa). Positions 130–141 are enriched in low complexity; it reads HVSSHSHSALHA. The region spanning 152 to 461 is the Tyrosine-protein phosphatase domain; that stretch reads SHLDPRTPPL…DVLIKLAEGQ (310 aa). C403 serves as the catalytic Phosphocysteine intermediate.

It belongs to the protein-tyrosine phosphatase family. Non-receptor class subfamily.

Its subcellular location is the secreted. It catalyses the reaction O-phospho-L-tyrosyl-[protein] + H2O = L-tyrosyl-[protein] + phosphate. Essential virulence determinant. This protein is a protein tyrosine phosphatase. The essential function of YopH in Yersinia pathogenesis is host-protein dephosphorylation. It contributes to the ability of the bacteria to resist phagocytosis by peritoneal macrophages. The sequence is that of Tyrosine-protein phosphatase YopH (yopH) from Yersinia pseudotuberculosis serotype I (strain IP32953).